We begin with the raw amino-acid sequence, 891 residues long: DNA mismatch repair protein MutS (891 aa).

617-624 (GPNMSGKS) serves as a coordination point for ATP. Over residues 805 to 827 (REKIEEEEPKTKDTKRGPSEKVK) the composition is skewed to basic and acidic residues. The interval 805–840 (REKIEEEEPKTKDTKRGPSEKVKNASPTLPRDEKGR) is disordered.

This sequence belongs to the DNA mismatch repair MutS family.

Functionally, this protein is involved in the repair of mismatches in DNA. It is possible that it carries out the mismatch recognition step. This protein has a weak ATPase activity. The sequence is that of DNA mismatch repair protein MutS from Porphyromonas gingivalis (strain ATCC BAA-308 / W83).